Reading from the N-terminus, the 297-residue chain is Tyrosine recombinase XerC (297 aa).

Residues 1–83 (MAILDEFDEH…AVKAFTAWAK (83 aa)) form the Core-binding (CB) domain. In terms of domain architecture, Tyr recombinase spans 104–291 (TLPAVLRQDQ…AVSRLRVVHD (188 aa)). Catalysis depends on residues Arg-148, Lys-172, His-243, Arg-246, and His-269. Tyr-278 acts as the O-(3'-phospho-DNA)-tyrosine intermediate in catalysis.

Belongs to the 'phage' integrase family. XerC subfamily. As to quaternary structure, forms a cyclic heterotetrameric complex composed of two molecules of XerC and two molecules of XerD.

Its subcellular location is the cytoplasm. In terms of biological role, site-specific tyrosine recombinase, which acts by catalyzing the cutting and rejoining of the recombining DNA molecules. The XerC-XerD complex is essential to convert dimers of the bacterial chromosome into monomers to permit their segregation at cell division. It also contributes to the segregational stability of plasmids. The chain is Tyrosine recombinase XerC from Mycobacterium leprae (strain TN).